The chain runs to 366 residues: tRNA pseudouridine synthase B (366 aa).

Aspartate 44 serves as the catalytic Nucleophile.

Belongs to the pseudouridine synthase TruB family. Type 1 subfamily.

It carries out the reaction uridine(55) in tRNA = pseudouridine(55) in tRNA. In terms of biological role, responsible for synthesis of pseudouridine from uracil-55 in the psi GC loop of transfer RNAs. This is tRNA pseudouridine synthase B from Treponema pallidum (strain Nichols).